The chain runs to 80 residues: Large ribosomal subunit protein bL31B (80 aa).

Belongs to the bacterial ribosomal protein bL31 family. Type B subfamily. Part of the 50S ribosomal subunit.

The polypeptide is Large ribosomal subunit protein bL31B (Streptococcus sanguinis (strain SK36)).